Here is a 208-residue protein sequence, read N- to C-terminus: Guanylate kinase (208 aa).

The Guanylate kinase-like domain occupies 5-184; sequence GLLIVFSGPS…AAERVKCVIE (180 aa). 12–19 contacts ATP; that stretch reads GPSGVGKG.

It belongs to the guanylate kinase family.

Its subcellular location is the cytoplasm. The enzyme catalyses GMP + ATP = GDP + ADP. Essential for recycling GMP and indirectly, cGMP. The protein is Guanylate kinase of Streptococcus pneumoniae serotype 4 (strain ATCC BAA-334 / TIGR4).